A 271-amino-acid chain; its full sequence is 3-methyl-2-oxobutanoate hydroxymethyltransferase (271 aa).

2 residues coordinate Mg(2+): D51 and D90. 3-methyl-2-oxobutanoate contacts are provided by residues 51–52 (DS), D90, and K118. E120 contacts Mg(2+). The active-site Proton acceptor is E186.

This sequence belongs to the PanB family. As to quaternary structure, homodecamer; pentamer of dimers. Mg(2+) is required as a cofactor.

The protein localises to the cytoplasm. The catalysed reaction is 3-methyl-2-oxobutanoate + (6R)-5,10-methylene-5,6,7,8-tetrahydrofolate + H2O = 2-dehydropantoate + (6S)-5,6,7,8-tetrahydrofolate. It functions in the pathway cofactor biosynthesis; (R)-pantothenate biosynthesis; (R)-pantoate from 3-methyl-2-oxobutanoate: step 1/2. In terms of biological role, catalyzes the reversible reaction in which hydroxymethyl group from 5,10-methylenetetrahydrofolate is transferred onto alpha-ketoisovalerate to form ketopantoate. This chain is 3-methyl-2-oxobutanoate hydroxymethyltransferase, found in Xanthomonas oryzae pv. oryzae (strain PXO99A).